The sequence spans 432 residues: Mannan endo-1,4-beta-mannosidase 1 (432 aa).

Positions 1–28 (MRLLGAHRAALLVLACVVVVVIHGLGEA) are cleaved as a signal peptide. Trp-93 and Asn-209 together coordinate substrate. Glu-210 (proton donor) is an active-site residue. Position 289 (Tyr-289) interacts with substrate. Residue Glu-329 is the Nucleophile of the active site. Trp-371 is a substrate binding site.

It belongs to the glycosyl hydrolase 5 (cellulase A) family. Ubiquitous.

Its subcellular location is the secreted. It catalyses the reaction Random hydrolysis of (1-&gt;4)-beta-D-mannosidic linkages in mannans, galactomannans and glucomannans.. The protein is Mannan endo-1,4-beta-mannosidase 1 (MAN1) of Oryza sativa subsp. japonica (Rice).